The following is a 369-amino-acid chain: DNA replication and repair protein RecF (369 aa).

Glycine 30–threonine 37 lines the ATP pocket.

Belongs to the RecF family.

The protein resides in the cytoplasm. Functionally, the RecF protein is involved in DNA metabolism; it is required for DNA replication and normal SOS inducibility. RecF binds preferentially to single-stranded, linear DNA. It also seems to bind ATP. This chain is DNA replication and repair protein RecF, found in Streptococcus agalactiae serotype III (strain NEM316).